The chain runs to 156 residues: Ribosomal RNA large subunit methyltransferase H (156 aa).

S-adenosyl-L-methionine contacts are provided by residues L73, G104, and 123–128 (LSSLTL).

The protein belongs to the RNA methyltransferase RlmH family. As to quaternary structure, homodimer.

It localises to the cytoplasm. It catalyses the reaction pseudouridine(1915) in 23S rRNA + S-adenosyl-L-methionine = N(3)-methylpseudouridine(1915) in 23S rRNA + S-adenosyl-L-homocysteine + H(+). Specifically methylates the pseudouridine at position 1915 (m3Psi1915) in 23S rRNA. The chain is Ribosomal RNA large subunit methyltransferase H from Neisseria meningitidis serogroup A / serotype 4A (strain DSM 15465 / Z2491).